Here is a 1323-residue protein sequence, read N- to C-terminus: Nck-associated protein 5-like (1323 aa).

Disordered regions lie at residues 1–22 (MDQP…DSME), 113–142 (QIPL…TSLP), 156–175 (QQLR…ALDA), 204–238 (PATP…PWAP), 260–314 (PGEE…DTLL), and 341–714 (GATG…EQPE). The mediates interaction with CDK5RAP2 and is required for homodimerization and microtubule bundle formation stretch occupies residues 1 to 135 (MDQPAGGTGK…PTSPAPNVSE (135 aa)). Residues 22 to 109 (ELSTCQELLH…LQQKLQLTAN (88 aa)) adopt a coiled-coil conformation. Pro residues-rich tracts occupy residues 162–172 (GPGPPATPPPA) and 226–236 (CGPPQPEPSPW). Residues 271–298 (ASSRAPPSAQGPSSGPHCAPGSSSSSSS) show a composition bias toward low complexity. Pro residues predominate over residues 353 to 364 (PGKPNSPDPGPP). A phosphoserine; by CDK1 mark is found at Ser436, Ser447, Ser466, and Ser473. The (S/T)X(I/L)P motif 1 motif lies at 480 to 483 (SRIP). A phosphoserine mark is found at Ser489, Ser492, and Ser494. Positions 531–542 (LRPSQSTVSTAL) are enriched in polar residues. Ser573 is subject to Phosphoserine; by CDK1. Positions 647-660 (RPGDPSHTPLRDRL) are enriched in basic and acidic residues. Thr654 is modified (phosphothreonine). A mediates interaction with beta-tubulin and is required for microtubule bundle formation region spans residues 743 to 1136 (RVYSSHSMGA…SGTPSKNLPK (394 aa)). A Phosphoserine; by CDK1 modification is found at Ser760. Disordered stretches follow at residues 778 to 875 (ALCP…HSAI), 892 to 948 (GQER…EVKT), 979 to 1003 (AYLS…GQAQ), and 1027 to 1323 (KELP…GSQG). Low complexity predominate over residues 799-817 (KPKSPHSSPTKLPSKSPTK). The short motif at 808–811 (TKLP) is the (S/T)X(I/L)P motif 2 element. The short motif at 918–921 (SKLP) is the (S/T)X(I/L)P motif 3; required for interaction with MAPRE1 element. Positions 925-934 (RRTEATKNKD) are enriched in basic and acidic residues. Positions 942 to 985 (LRKEVKTEARKLEAESLNISKLMAKAEDLRRALEEEKAYLSRAR) form a coiled coil. Residues 1027–1041 (KELPPKSWREPKPEY) show a composition bias toward basic and acidic residues. Polar residues-rich tracts occupy residues 1097 to 1112 (VSTT…TRTL) and 1124 to 1136 (HSSS…NLPK). Pro residues predominate over residues 1143 to 1153 (DPPPGAPPARP). Ser1184 bears the Phosphoserine mark. Polar residues-rich tracts occupy residues 1225 to 1237 (TFPN…SSSD) and 1264 to 1273 (VDPSRTSTPQ). Over residues 1302-1323 (LETSESLSDSLYDSLSSCGSQG) the composition is skewed to low complexity.

In terms of assembly, homodimer. Interacts with CDK5RAP2. Interacts with MAPRE1. Interacts with beta-tubulin. In terms of processing, CDK1/Cyclin B-dependent phosphorylation mediates its dissociation from centrosomes during mitosis.

The protein localises to the cytoplasm. It localises to the cytoskeleton. Its subcellular location is the microtubule organizing center. The protein resides in the centrosome. Functionally, regulates microtubule organization and stabilization. Promotes microtubule growth and bundling formation and stabilizes microtubules by increasing intense acetylation of microtubules. Both tubulin-binding and homodimer formation are required for NCKAP5L-mediated microtubule bundle formation. The polypeptide is Nck-associated protein 5-like (Nckap5l) (Mus musculus (Mouse)).